The sequence spans 430 residues: MEGEPSQPPNSSWPLSQNGTNTEATPATNLTFSSYYQHTSPVAAMFIVAYALIFLLCMVGNTLVCFIVLKNRHMHTVTNMFILNLAVSDLLVGIFCMPTTLVDNLITGWPFDNATCKMSGLVQGMSVSASVFTLVAIAVERFRCIVHPFREKLTLRKALVTIAVIWALALLIMCPSAVTLTVTREEHHFMVDARNRSYPLYSCWEAWPEKGMRRVYTTVLFSHIYLAPLALIVVMYARIARKLCQAPGPAPGGEEAADPRASRRRARVVHMLVMVALFFTLSWLPLWALLLLIDYGQLSAPQLHLVTVYAFPFAHWLAFFNSSANPIIYGYFNENFRRGFQAAFRARLCPRPSGSHKEAYSERPGGLLHRRVFVVVRPSDSGLPSESGPSSGAPRPGRLPLRNGRVAHHGLPREGPGCSHLPLTIPAWDI.

The interval Met-1 to Thr-20 is disordered. Residues Met-1–Ala-43 lie on the Extracellular side of the membrane. A compositionally biased stretch (polar residues) spans Pro-9–Thr-20. N-linked (GlcNAc...) asparagine glycans are attached at residues Asn-10, Asn-18, and Asn-29. The chain crosses the membrane as a helical span at residues Ala-44 to Val-64. Over Cys-65 to Met-80 the chain is Cytoplasmic. The helical transmembrane segment at Phe-81–Leu-101 threads the bilayer. Over Val-102–Lys-117 the chain is Extracellular. Asn-113 is a glycosylation site (N-linked (GlcNAc...) asparagine). Cys-116 and Cys-203 form a disulfide bridge. Residues Met-118 to Ala-138 traverse the membrane as a helical segment. The Cytoplasmic segment spans residues Val-139–Ala-158. The chain crosses the membrane as a helical span at residues Leu-159–Thr-179. Topologically, residues Leu-180–Arg-214 are extracellular. Asn-195 is a glycosylation site (N-linked (GlcNAc...) asparagine). Residues Val-215–Met-235 form a helical membrane-spanning segment. The Cytoplasmic segment spans residues Tyr-236–Met-271. A helical membrane pass occupies residues Leu-272–Leu-292. The Extracellular portion of the chain corresponds to Ile-293–Thr-307. Residues Val-308–Ile-328 form a helical membrane-spanning segment. Residues Tyr-329–Ile-430 are Cytoplasmic-facing. Low complexity predominate over residues Ser-379–Gly-404. The disordered stretch occupies residues Ser-379–Arg-413.

It belongs to the G-protein coupled receptor 1 family.

The protein resides in the cell membrane. Receptor for NPAF (A-18-F-amide) and NPFF (F-8-F-amide) neuropeptides, also known as morphine-modulating peptides. Can also be activated by a variety of naturally occurring or synthetic FMRF-amide like ligands. This receptor mediates its action by association with G proteins that activate a phosphatidylinositol-calcium second messenger system. The sequence is that of Neuropeptide FF receptor 1 from Homo sapiens (Human).